The primary structure comprises 41 residues: Perlinhibin (41 aa).

Post-translationally, contains four disulfide bonds.

Functionally, binds to calcite crystals in the shell and inhibits further shell growth at the binding site. The protein is Perlinhibin of Haliotis laevigata (Smooth Australian abalone).